We begin with the raw amino-acid sequence, 341 residues long: GTP 3',8-cyclase (341 aa).

One can recognise a Radical SAM core domain in the interval 11 to 231; sequence QKSRPLRDLR…RIINEDMPIE (221 aa). Arg-20 contributes to the GTP binding site. Residues Cys-27 and Cys-31 each contribute to the [4Fe-4S] cluster site. Position 33 (Tyr-33) interacts with S-adenosyl-L-methionine. Cys-34 provides a ligand contact to [4Fe-4S] cluster. Arg-75 contributes to the GTP binding site. Gly-79 provides a ligand contact to S-adenosyl-L-methionine. A GTP-binding site is contributed by Thr-106. Ser-130 contacts S-adenosyl-L-methionine. Position 167 (Lys-167) interacts with GTP. Met-201 contacts S-adenosyl-L-methionine. [4Fe-4S] cluster-binding residues include Cys-265 and Cys-268. Residue 270–272 coordinates GTP; that stretch reads RAR. Cys-282 provides a ligand contact to [4Fe-4S] cluster.

This sequence belongs to the radical SAM superfamily. MoaA family. In terms of assembly, monomer and homodimer. Requires [4Fe-4S] cluster as cofactor.

It carries out the reaction GTP + AH2 + S-adenosyl-L-methionine = (8S)-3',8-cyclo-7,8-dihydroguanosine 5'-triphosphate + 5'-deoxyadenosine + L-methionine + A + H(+). The protein operates within cofactor biosynthesis; molybdopterin biosynthesis. Functionally, catalyzes the cyclization of GTP to (8S)-3',8-cyclo-7,8-dihydroguanosine 5'-triphosphate. The polypeptide is GTP 3',8-cyclase (Bacillus licheniformis (strain ATCC 14580 / DSM 13 / JCM 2505 / CCUG 7422 / NBRC 12200 / NCIMB 9375 / NCTC 10341 / NRRL NRS-1264 / Gibson 46)).